The following is a 411-amino-acid chain: Diaminobutyrate--2-oxoglutarate transaminase (411 aa).

Lys-262 bears the N6-(pyridoxal phosphate)lysine mark.

This sequence belongs to the class-III pyridoxal-phosphate-dependent aminotransferase family. It depends on pyridoxal 5'-phosphate as a cofactor.

It carries out the reaction L-2,4-diaminobutanoate + 2-oxoglutarate = L-aspartate 4-semialdehyde + L-glutamate. It participates in amine and polyamine biosynthesis; ectoine biosynthesis; L-ectoine from L-aspartate 4-semialdehyde: step 1/3. Catalyzes reversively the conversion of L-aspartate beta-semialdehyde (ASA) to L-2,4-diaminobutyrate (DABA) by transamination with L-glutamate. The polypeptide is Diaminobutyrate--2-oxoglutarate transaminase (ectB) (Vibrio cholerae serotype O1 (strain ATCC 39315 / El Tor Inaba N16961)).